The primary structure comprises 301 residues: Probable alpha-L-glutamate ligase (301 aa).

Residues 104–287 (LQLLSRRGIG…VAGIIIEHLE (184 aa)) enclose the ATP-grasp domain. ATP is bound by residues lysine 141, 178–179 (EY), aspartate 187, and 211–213 (RSN). 3 residues coordinate Mg(2+): aspartate 248, glutamate 260, and asparagine 262. Mn(2+) contacts are provided by aspartate 248, glutamate 260, and asparagine 262.

Belongs to the RimK family. It depends on Mg(2+) as a cofactor. Requires Mn(2+) as cofactor.

The sequence is that of Probable alpha-L-glutamate ligase from Pseudomonas fluorescens (strain SBW25).